The following is a 799-amino-acid chain: MAGWIQAQQLQGDALRQMQVLYGQHFPIEVRHYLAQWIESQPWDAIDVDNPQDRAQATQLLENLVQELQKKAEHQVGEDGFLLKIKLGHYATQLQNTYDRCPMELVRCIRHILYNEQRLVREANNGSSSAGILVDAMSQKHLQINQTFEELRLVTQDTENELKKLQQTQEYFIIQYQESLRIQAQFAQLAQLNPQECLSRETALQQKQVTLEAWLQREAQTLQQYRVELAEKHQKTLQLLRKQQTIILDDELIQWKRRQQLAGNGGPPEGSLDVLQSWCEKLAEIIWQNRQQIRRAEHLCQQLPIPGPVEEMLAEVNATITDIISALVTSTFIIEKQPPQVLKTQTKFAATVRLLVGGKLNVHMNPPQVKATIISEQQAKSLLKNESTRNECSGEILNNCCVMEYHQATGTLSAHFRNMSLKRIKRADRRGAESVTEEKFTVLFESQFSVGSNELVFQVKTLSLPVVVIVHGSQDHNATATVLWDNAFAEPGRVPFAVPDKVLWPQLCEALNMKFKAEVQSNRGLTKENLVFLAQKLFNSSSSHLEDYSGMSVSWSQFNRENLPGWNYTFWQWFDGVMEVLKKHHKPHWNDGAILGFVNKQQAHDLLINKPDGTFLLRFSDSEIGGITIAWKFDSPDRNLWNLKPFTTRDFSIRSLADRLGDLSYLIYVFPDRPKDEVFSKYYTPVLAPASAAKAVDGYVKPQIKQVVPEFVSASSDSAGGNATYMDQAPSPAVCPQAHYSIYPQNPDPVLDQDGEFDLDETMDVARHVEELLRRPMDSLDPRLSPPAGLFASTRGSLS.

Residue Tyr90 is modified to Phosphotyrosine. Ser128 bears the Phosphoserine mark. The region spanning 589–686 is the SH2 domain; sequence WNDGAILGFV…EVFSKYYTPV (98 aa). The residue at position 682 (Tyr682) is a Phosphotyrosine. Tyr699 bears the Phosphotyrosine; by JAK2 mark. Residues 778–799 form a disordered region; sequence DSLDPRLSPPAGLFASTRGSLS. Ser785 is subject to Phosphoserine.

Belongs to the transcription factor STAT family. As to quaternary structure, forms a homodimer or a heterodimer with a related family member. Binds NR3C1. Interacts with NCOA1 and SOCS7. Interacts with ERBB4. Interacts with EBF4. Interacts with CD69. In terms of processing, ISGylated. Tyrosine phosphorylated in response to KITLG/SCF, IL2, IL3, IL7, IL15, CSF2/GMCSF, GH1, PRL, EPO and THPO. Activated KIT promotes phosphorylation on tyrosine residues and subsequent translocation to the nucleus. Tyrosine phosphorylated in response to constitutively activated FGFR1, FGFR2, FGFR3 and FGFR4. Tyrosine phosphorylation is required for DNA-binding activity and dimerization. Serine phosphorylation is also required for maximal transcriptional activity. Tyrosine phosphorylated in response to signaling via activated FLT3; wild-type FLT3 results in much weaker phosphorylation than constitutively activated mutant FLT3. Alternatively, can be phosphorylated by JAK2 at Tyr-699.

The protein resides in the cytoplasm. It is found in the nucleus. Its function is as follows. Carries out a dual function: signal transduction and activation of transcription. Mediates cellular responses to the cytokine KITLG/SCF and other growth factors. May mediate cellular responses to activated FGFR1, FGFR2, FGFR3 and FGFR4. Binds to the GAS element and activates PRL-induced transcription. Regulates the expression of milk proteins during lactation. This Sus scrofa (Pig) protein is Signal transducer and activator of transcription 5A (STAT5A).